We begin with the raw amino-acid sequence, 61 residues long: Small ribosomal subunit protein uS14 (61 aa).

Zn(2+) contacts are provided by Cys-24, Cys-27, Cys-40, and Cys-43.

This sequence belongs to the universal ribosomal protein uS14 family. Zinc-binding uS14 subfamily. Part of the 30S ribosomal subunit. Contacts proteins S3 and S10. The cofactor is Zn(2+).

Binds 16S rRNA, required for the assembly of 30S particles and may also be responsible for determining the conformation of the 16S rRNA at the A site. This chain is Small ribosomal subunit protein uS14, found in Alkaliphilus oremlandii (strain OhILAs) (Clostridium oremlandii (strain OhILAs)).